Consider the following 355-residue polypeptide: Protein pelota homolog (355 aa).

It belongs to the eukaryotic release factor 1 family. Pelota subfamily. Monomer. Requires a divalent metal cation as cofactor.

The protein resides in the cytoplasm. Functionally, may function in recognizing stalled ribosomes, interact with stem-loop structures in stalled mRNA molecules, and effect endonucleolytic cleavage of the mRNA. May play a role in the release non-functional ribosomes and degradation of damaged mRNAs. Has endoribonuclease activity. This chain is Protein pelota homolog, found in Haloarcula marismortui (strain ATCC 43049 / DSM 3752 / JCM 8966 / VKM B-1809) (Halobacterium marismortui).